The primary structure comprises 199 residues: Holliday junction branch migration complex subunit RuvA (199 aa).

A domain I region spans residues 1–64; sequence MIALLTGKLA…EDAINLYGFR (64 aa). A domain II region spans residues 65–143; it reads TQQEKELFQL…KLGLAQPQAG (79 aa). Residues 144 to 148 form a flexible linker region; that stretch reads GTTAP. The tract at residues 149–199 is domain III; sequence AKQEIRDDVLSALINLGYKEAVVQKALAELKVTEDATVELVLKQALKILMK.

The protein belongs to the RuvA family. As to quaternary structure, homotetramer. Forms an RuvA(8)-RuvB(12)-Holliday junction (HJ) complex. HJ DNA is sandwiched between 2 RuvA tetramers; dsDNA enters through RuvA and exits via RuvB. An RuvB hexamer assembles on each DNA strand where it exits the tetramer. Each RuvB hexamer is contacted by two RuvA subunits (via domain III) on 2 adjacent RuvB subunits; this complex drives branch migration. In the full resolvosome a probable DNA-RuvA(4)-RuvB(12)-RuvC(2) complex forms which resolves the HJ.

Its subcellular location is the cytoplasm. Its function is as follows. The RuvA-RuvB-RuvC complex processes Holliday junction (HJ) DNA during genetic recombination and DNA repair, while the RuvA-RuvB complex plays an important role in the rescue of blocked DNA replication forks via replication fork reversal (RFR). RuvA specifically binds to HJ cruciform DNA, conferring on it an open structure. The RuvB hexamer acts as an ATP-dependent pump, pulling dsDNA into and through the RuvAB complex. HJ branch migration allows RuvC to scan DNA until it finds its consensus sequence, where it cleaves and resolves the cruciform DNA. The sequence is that of Holliday junction branch migration complex subunit RuvA from Citrifermentans bemidjiense (strain ATCC BAA-1014 / DSM 16622 / JCM 12645 / Bem) (Geobacter bemidjiensis).